Consider the following 68-residue polypeptide: Neuronal regeneration-related protein (68 aa).

A disordered region spans residues 21 to 54 (MEGRLPKGRLPVPKEVNRKKNDETNAASLTPLGS). The span at 44 to 54 (TNAASLTPLGS) shows a compositional bias: polar residues.

As to quaternary structure, interacts with the latency-associated peptides (LAP) of TGFB1 and TGFB2; the interaction results in a decrease in TGFB autoinduction. Interacts with FLNA. Phosphorylated on Ser-59. Phosphorylation decreases stability and activity.

It localises to the cytoplasm. In terms of biological role, may have roles in neural function and cellular differentiation. Ectopic expression promotes axonal regeneration, induces differentiation of fibroblast into myofibroblast, induces myofibroblast ameboid migration, augments motility of gliomas, and increases retinoic-acid regulation of lipid-droplet biogenesis. Down-regulates the expression of TGFB1 and TGFB2 but not of TGFB3. May play a role in the regulation of alveolar generation. This chain is Neuronal regeneration-related protein (NREP), found in Pongo abelii (Sumatran orangutan).